Consider the following 227-residue polypeptide: tRNA (guanine-N(7)-)-methyltransferase (227 aa).

S-adenosyl-L-methionine contacts are provided by E60, E85, D112, and D135. The active site involves D135. Substrate contacts are provided by residues K139, D171, and 206-209 (TKFE).

Belongs to the class I-like SAM-binding methyltransferase superfamily. TrmB family.

The catalysed reaction is guanosine(46) in tRNA + S-adenosyl-L-methionine = N(7)-methylguanosine(46) in tRNA + S-adenosyl-L-homocysteine. Its pathway is tRNA modification; N(7)-methylguanine-tRNA biosynthesis. Functionally, catalyzes the formation of N(7)-methylguanine at position 46 (m7G46) in tRNA. The protein is tRNA (guanine-N(7)-)-methyltransferase of Thiobacillus denitrificans (strain ATCC 25259 / T1).